A 94-amino-acid polypeptide reads, in one-letter code: MNIKPLGERVVIKKLEAEEKTKSGIVLTGTAKERPQEAEVVAVGPGAVVDGNRVAMEVKVGDKVLYSKYAGTEVKVDGEEYTILKQDDILAIVE.

It belongs to the GroES chaperonin family. In terms of assembly, heptamer of 7 subunits arranged in a ring. Interacts with the chaperonin GroEL.

The protein localises to the cytoplasm. Functionally, together with the chaperonin GroEL, plays an essential role in assisting protein folding. The GroEL-GroES system forms a nano-cage that allows encapsulation of the non-native substrate proteins and provides a physical environment optimized to promote and accelerate protein folding. GroES binds to the apical surface of the GroEL ring, thereby capping the opening of the GroEL channel. The sequence is that of Co-chaperonin GroES from Clostridium beijerinckii (strain ATCC 51743 / NCIMB 8052) (Clostridium acetobutylicum).